The primary structure comprises 101 residues: UPF0473 protein EF_1204 (101 aa).

This sequence belongs to the UPF0473 family.

This is UPF0473 protein EF_1204 from Enterococcus faecalis (strain ATCC 700802 / V583).